The primary structure comprises 590 residues: UvrABC system protein C (590 aa).

In terms of domain architecture, GIY-YIG spans 14-91; that stretch reads EQPGCYLMKD…IKKHDPKYNV (78 aa). Residues 196 to 231 enclose the UVR domain; that stretch reads EDVKRELAEKMHEAAETLEFERAKEYRDQIAAIEMT.

It belongs to the UvrC family. Interacts with UvrB in an incision complex.

Its subcellular location is the cytoplasm. Its function is as follows. The UvrABC repair system catalyzes the recognition and processing of DNA lesions. UvrC both incises the 5' and 3' sides of the lesion. The N-terminal half is responsible for the 3' incision and the C-terminal half is responsible for the 5' incision. This chain is UvrABC system protein C, found in Geobacillus kaustophilus (strain HTA426).